Reading from the N-terminus, the 261-residue chain is 1-(5-phosphoribosyl)-5-[(5-phosphoribosylamino)methylideneamino] imidazole-4-carboxamide isomerase (261 aa).

Residue aspartate 8 is the Proton acceptor of the active site. Residue aspartate 139 is the Proton donor of the active site.

The protein belongs to the HisA/HisF family.

The protein resides in the cytoplasm. The enzyme catalyses 1-(5-phospho-beta-D-ribosyl)-5-[(5-phospho-beta-D-ribosylamino)methylideneamino]imidazole-4-carboxamide = 5-[(5-phospho-1-deoxy-D-ribulos-1-ylimino)methylamino]-1-(5-phospho-beta-D-ribosyl)imidazole-4-carboxamide. It participates in amino-acid biosynthesis; L-histidine biosynthesis; L-histidine from 5-phospho-alpha-D-ribose 1-diphosphate: step 4/9. In Janthinobacterium sp. (strain Marseille) (Minibacterium massiliensis), this protein is 1-(5-phosphoribosyl)-5-[(5-phosphoribosylamino)methylideneamino] imidazole-4-carboxamide isomerase.